Here is a 280-residue protein sequence, read N- to C-terminus: Cytochrome bc1 complex cytochrome c subunit (280 aa).

Residues 25-45 traverse the membrane as a helical segment; the sequence is LSGGVLLLIALTIAGGLAAVL. 2 consecutive Cytochrome c domains span residues 60–140 and 161–239; these read ALLR…QANG and NDLG…KVAT. Residues Cys73, Cys76, His77, Cys174, Cys177, and His178 each coordinate heme c. The chain crosses the membrane as a helical span at residues 258-278; sequence GMAMWIIGMVAAIGLALWIGA.

As to quaternary structure, the cytochrome bc1 complex is composed of a cytochrome b (QcrB), the Rieske iron-sulfur protein (QcrA) and a diheme cytochrome c (QcrC) subunit. Post-translationally, binds 2 heme c groups covalently per subunit.

The protein localises to the cell membrane. The catalysed reaction is a quinol + 2 Fe(III)-[cytochrome c](out) = a quinone + 2 Fe(II)-[cytochrome c](out) + 2 H(+)(out). Cytochrome b subunit of the cytochrome bc1 complex, an essential component of the respiratory electron transport chain required for ATP synthesis. The bc1 complex catalyzes the oxidation of ubiquinol and the reduction of cytochrome c in the respiratory chain. The bc1 complex operates through a Q-cycle mechanism that couples electron transfer to generation of the proton gradient that drives ATP synthesis. In Mycobacterium bovis (strain ATCC BAA-935 / AF2122/97), this protein is Cytochrome bc1 complex cytochrome c subunit (qcrC).